A 242-amino-acid chain; its full sequence is Methylthioribulose-1-phosphate dehydratase (242 aa).

Phosphoserine is present on Ser-87. Cys-97 contacts substrate. His-115 and His-117 together coordinate Zn(2+). The active-site Proton donor/acceptor is Glu-139. A Zn(2+)-binding site is contributed by His-195.

Belongs to the aldolase class II family. MtnB subfamily. Homotetramer. Interacts with APAF1. May interact with CASP1. The cofactor is Zn(2+). Isoform 1 is ubiquitously expressed. Isoform 2 is expressed at lower levels and detected in heart, brain, pancreas, liver, placenta, skeletal muscle and kidney.

The protein localises to the cytoplasm. It catalyses the reaction 5-(methylsulfanyl)-D-ribulose 1-phosphate = 5-methylsulfanyl-2,3-dioxopentyl phosphate + H2O. It participates in amino-acid biosynthesis; L-methionine biosynthesis via salvage pathway; L-methionine from S-methyl-5-thio-alpha-D-ribose 1-phosphate: step 2/6. Its function is as follows. Catalyzes the dehydration of methylthioribulose-1-phosphate (MTRu-1-P) into 2,3-diketo-5-methylthiopentyl-1-phosphate (DK-MTP-1-P). Functions in the methionine salvage pathway, which plays a key role in cancer, apoptosis, microbial proliferation and inflammation. May inhibit the CASP1-related inflammatory response (pyroptosis), the CASP9-dependent apoptotic pathway and the cytochrome c-dependent and APAF1-mediated cell death. In Homo sapiens (Human), this protein is Methylthioribulose-1-phosphate dehydratase.